Here is a 247-residue protein sequence, read N- to C-terminus: Small ribosomal subunit protein uS2 (247 aa).

The protein belongs to the universal ribosomal protein uS2 family.

This is Small ribosomal subunit protein uS2 from Ralstonia nicotianae (strain ATCC BAA-1114 / GMI1000) (Ralstonia solanacearum).